The following is a 198-amino-acid chain: Mediator of RNA polymerase II transcription subunit 20 (198 aa).

The protein belongs to the Mediator complex subunit 20 family. In terms of assembly, component of the Mediator complex.

It is found in the nucleus. In terms of biological role, component of the Mediator complex, a coactivator involved in the regulated transcription of nearly all RNA polymerase II-dependent genes. Mediator functions as a bridge to convey information from gene-specific regulatory proteins to the basal RNA polymerase II transcription machinery. Mediator is recruited to promoters by direct interactions with regulatory proteins and serves as a scaffold for the assembly of a functional preinitiation complex with RNA polymerase II and the general transcription factors. This is Mediator of RNA polymerase II transcription subunit 20 (mdt-20) from Caenorhabditis briggsae.